Reading from the N-terminus, the 2374-residue chain is Genome polyprotein (2374 aa).

Glycine 115 carries the N-myristoyl glycine; by host lipid modification. 2 disordered regions span residues 144–176 (GDMP…GNVV) and 707–739 (GADG…FDYP). Residues 157–174 (GSNKGGSSTSPKSTSNGN) are compositionally biased toward low complexity. Residues 716–728 (APTSDLSDGNPTT) are compositionally biased toward polar residues. The SF3 helicase domain maps to 1361–1525 (YSTALSAISL…VAFSAAAALQ (165 aa)). Residue 1387–1394 (GPPGTGKS) coordinates ATP. Glycine 1600 is lipidated: N-myristoyl glycine; by host. A helical transmembrane segment spans residues 1649-1669 (IFAASSFLSLIAATLTIVRCL). Residues 1677–1699 (GAYSGTPVPKPRKKDLPKQPVYS) are disordered. An O-(5'-phospho-RNA)-tyrosine modification is found at tyrosine 1679. Positions 1700–1889 (GPVRRQGFDP…FSARLTPERV (190 aa)) constitute a Peptidase C3 domain. Active-site for protease 3C activity residues include histidine 1748, glutamate 1779, and cysteine 1852. One can recognise a RdRp catalytic domain in the interval 2126 to 2243 (SNVWSIDYSC…GSNQDFHPRE (118 aa)). Residues aspartate 2132 and aspartate 2229 each act as for RdRp activity in the active site.

In terms of assembly, interacts with capsid protein VP1. Interacts with capsid protein VP3. Interacts with capsid protein VP0. Interacts with capsid protein VP3. As to quaternary structure, interacts with capsid protein VP0. Interacts with capsid protein VP1. In terms of assembly, homodimer. Interacts with protein 2B. Interacts with protein 2C. Homodimer. Interacts with host ABCD3. Interacts with protein 2A. Interacts with host ACBD3. As to quaternary structure, homodimer. Interacts with host ABCD3. Interacts with protein 2A. Interacts with protein 3A. Interacts with protein 3C. Interacts with host ACBD3. In terms of assembly, homodimer. Interacts with host ABCD3 (via GOLD domain) and PI4KB; these interactions allow the formation of a viral protein/ACBD3/PI4KB complex in order to synthesize PI4P at the viral RNA replication sites. Interacts with protein 2C. Interacts with protein 3C. Protein 3C: Interacts with protein 2A. Protein 3C: Interacts with protein 2C. Specific enzymatic cleavages by the viral protease in vivo yield a variety of precursors and mature proteins. The leader protein-VP0 junction is cleaved by 3C proteinase. The VP1/2A junction is cleaved by the protein 3CD in association with protein 2A. In terms of processing, uridylylated by the polymerase and is covalently linked to the 5'-end of genomic RNA. This uridylylated form acts as a nucleotide-peptide primer for the polymerase.

The protein localises to the virion. It localises to the host cytoplasm. The protein resides in the host cytoplasmic vesicle membrane. It is found in the host Golgi apparatus membrane. The catalysed reaction is Selective cleavage of Gln-|-Gly bond in the poliovirus polyprotein. In other picornavirus reactions Glu may be substituted for Gln, and Ser or Thr for Gly.. It catalyses the reaction RNA(n) + a ribonucleoside 5'-triphosphate = RNA(n+1) + diphosphate. It carries out the reaction ATP + H2O = ADP + phosphate + H(+). Functionally, required for viral RNA replication and viral RNA encapsidation. Does not have any proteolytic activity. Forms an icosahedral capsid of pseudo T=3 symmetry with capsid proteins VP0 and VP3. Together they form an icosahedral capsid composed of 60 copies of each VP0, VP1, and VP3. All the three latter proteins contain a beta-sheet structure called beta-barrel jelly roll. Its function is as follows. Forms an icosahedral capsid of pseudo T=3 symmetry with capsid proteins VP1 and VP3. Together they form an icosahedral capsid composed of 60 copies of each VP0, VP1, and VP3. All the three latter proteins contain a beta-sheet structure called beta-barrel jelly roll. In terms of biological role, forms an icosahedral capsid of pseudo T=3 symmetry with capsid proteins VP0 and VP1. Together they form an icosahedral capsid composed of 60 copies of each VP0, VP1, and VP3. All the three latter proteins contain a beta-sheet structure called beta-barrel jelly roll. Functionally, required for viral RNA replication. Does not have any proteolytic activity. Affects membrane integrity and causes an increase in membrane permeability. Its function is as follows. Induces and associates with structural rearrangements of intracellular membranes. Displays RNA-binding, nucleotide binding and NTPase activities. May play a role in virion morphogenesis and viral RNA encapsidation by interacting with the capsid protein VP3. In terms of biological role, serves as membrane anchor via its hydrophobic domain. Plays an essential role in viral RNA replication by recruiting PI4KB at the viral replication sites, thereby allowing the formation of rearranged membranous structures where viral replication takes place. Functionally, forms a primer, VPg-pU, which is utilized by the polymerase for the initiation of RNA chains. Cysteine protease that generates mature viral proteins from the precursor polyprotein. In addition to its proteolytic activity, it binds to viral RNA, and thus influences viral genome replication. RNA and substrate cooperatively bind to the protease. Its function is as follows. Replicates the genomic and antigenomic RNAs by recognizing replications specific signals. Performs VPg uridylylation. This Salivirus A (isolate Human/Nigeria/NG-J1/2007) (SV-A) protein is Genome polyprotein.